Consider the following 419-residue polypeptide: MNLLEHMGKAAKQASWQLAMLSTAKKNQALAVIANLLESESQTILQANERDMAAARESGMSEALLDRLLLTPARLAAIANDVRQVCRLNDPVGRVIDGSLLDSGLKLERRRVPLGVIGVIYEARPNVTIDVASLCLKTGNAVILRGGKETHHTNQATVNVIQRALEQCGLPAAAVQAIESPDRQLVNELLRLDRYVDMLIPRGGASLHKLCREQSTIPVITGGIGVCHTFVDENADFEKALLVIENAKIQRPSACNSLETLLVHQAVAKTFLPLLSARMHAFGVTLHASPLAMPYLADGKAKVVAVEAADYDDEWLSLDLNVDIVTDIDAAIDHIREHGTSHSDAILTRSLSHAEYFVRAVDSSAVYVNASTRFTDGGQFGLGAEVAVSTQKLHARGPMGLDALTTYKWIGYGDDLVRS.

This sequence belongs to the gamma-glutamyl phosphate reductase family.

The protein resides in the cytoplasm. The catalysed reaction is L-glutamate 5-semialdehyde + phosphate + NADP(+) = L-glutamyl 5-phosphate + NADPH + H(+). It functions in the pathway amino-acid biosynthesis; L-proline biosynthesis; L-glutamate 5-semialdehyde from L-glutamate: step 2/2. Functionally, catalyzes the NADPH-dependent reduction of L-glutamate 5-phosphate into L-glutamate 5-semialdehyde and phosphate. The product spontaneously undergoes cyclization to form 1-pyrroline-5-carboxylate. This Yersinia pseudotuberculosis serotype O:1b (strain IP 31758) protein is Gamma-glutamyl phosphate reductase.